Here is a 322-residue protein sequence, read N- to C-terminus: Malate dehydrogenase (322 aa).

Residues glycine 10–glycine 15 and aspartate 34 contribute to the NAD(+) site. The substrate site is built by arginine 83 and arginine 89. Residues asparagine 96 and isoleucine 119–asparagine 121 each bind NAD(+). 2 residues coordinate substrate: asparagine 121 and arginine 152. Histidine 176 serves as the catalytic Proton acceptor.

It belongs to the LDH/MDH superfamily. MDH type 3 family.

It carries out the reaction (S)-malate + NAD(+) = oxaloacetate + NADH + H(+). Catalyzes the reversible oxidation of malate to oxaloacetate. The protein is Malate dehydrogenase of Nitrobacter winogradskyi (strain ATCC 25391 / DSM 10237 / CIP 104748 / NCIMB 11846 / Nb-255).